Consider the following 146-residue polypeptide: Dihydroneopterin aldolase 1 (146 aa).

Residues Glu-41, Tyr-73, and 92 to 93 (LE) each bind substrate. Lys-119 functions as the Proton donor/acceptor in the catalytic mechanism.

The protein belongs to the DHNA family. In terms of assembly, homooctamer. Forms a hollow cylinder assembled from two ring-shaped tetramers. In terms of tissue distribution, expressed in roots, leaves, stems and siliques.

The catalysed reaction is 7,8-dihydroneopterin = 6-hydroxymethyl-7,8-dihydropterin + glycolaldehyde. The protein operates within cofactor biosynthesis; tetrahydrofolate biosynthesis; 2-amino-4-hydroxy-6-hydroxymethyl-7,8-dihydropteridine diphosphate from 7,8-dihydroneopterin triphosphate: step 3/4. Its function is as follows. Catalyzes the conversion of 7,8-dihydroneopterin into 6-hydroxymethyl-7,8-dihydropterin, a biosynthetic precursor of the vitamin tetrahydrofolate. Can use L-threo-dihydroneopterin and D-erythro-dihydroneopterin as substrates for the formation of 6-hydroxymethyldihydropterin, but it can also catalyze the epimerization of carbon 2' of dihydroneopterin and dihydromonapterin. This chain is Dihydroneopterin aldolase 1, found in Arabidopsis thaliana (Mouse-ear cress).